The primary structure comprises 184 residues: Adenine phosphoribosyltransferase (184 aa).

This sequence belongs to the purine/pyrimidine phosphoribosyltransferase family. As to quaternary structure, homodimer.

The protein resides in the cytoplasm. It carries out the reaction AMP + diphosphate = 5-phospho-alpha-D-ribose 1-diphosphate + adenine. It participates in purine metabolism; AMP biosynthesis via salvage pathway; AMP from adenine: step 1/1. Functionally, catalyzes a salvage reaction resulting in the formation of AMP, that is energically less costly than de novo synthesis. This chain is Adenine phosphoribosyltransferase, found in Paracidovorax citrulli (strain AAC00-1) (Acidovorax citrulli).